The chain runs to 487 residues: MKPSTEWWRYLAPLAVIAIIALIPVPAGLESHTWLYFAVFTGVIVGLILEPVPGAVVAMVGISIIAILSPWLLFSPEQLAQPGFKFTAKSLSWAVSGFSNSVIWLIFAAFMFGTGYEKTGLGRRIALILVKKMGHRTLFLGYAVMFSELILAPVTPSNSARGAGIIYPIIRNLPPLYQSQPNDSSSRSIGSYIMWMGIVADCVTSAIFLTAMAPNLLLIGLMKSASHATLSWGDWFLGMLPLSILLVLLVPWLAYVLYPPVLKSGDQVPRWAETELQAMGPLCSREKRMLGLMVGALVLWIFGGDYIDAAMVGYSVVALMLLLRIISWDDIVSNKAAWNVFFWLASLITLATGLNNTGFISWFGKLLAGSLSGYSPTIVMVALIVVFYLLRYFFASATAYTSALAPMMIAAALAMPEIPLPVFCLMVGAAIGLGSILTPYATGPSPIYYGSGYLPTVDYWRLGAIFGLIFLVLLVITGLLWMPVVLL.

A run of 14 helical transmembrane segments spans residues 10 to 30 (YLAP…AGLE), 33 to 53 (TWLY…EPVP), 54 to 74 (GAVV…WLLF), 93 to 113 (WAVS…FMFG), 137 to 157 (TLFL…VTPS), 189 to 209 (IGSY…AIFL), 236 to 256 (FLGM…LAYV), 292 to 312 (LMVG…AAMV), 313 to 333 (GYSV…DIVS), 340 to 360 (VFFW…TGFI), 370 to 390 (SLSG…FYLL), 393 to 413 (FFAS…AAAL), 418 to 438 (IPLP…SILT), and 465 to 485 (IFGL…MPVV).

The protein belongs to the SLC13A/DASS transporter (TC 2.A.47) family. DIT1 subfamily.

It localises to the cell inner membrane. It catalyses the reaction (2R,3R)-tartrate(out) + succinate(in) = (2R,3R)-tartrate(in) + succinate(out). In terms of biological role, catalyzes the uptake of tartrate in exchange for intracellular succinate. Essential for anaerobic L-tartrate fermentation. The polypeptide is L-tartrate/succinate antiporter (ttdT) (Escherichia coli O6:K15:H31 (strain 536 / UPEC)).